A 303-amino-acid chain; its full sequence is Serine/threonine-protein phosphatase PP-X homolog 1 (303 aa).

D51, H53, D79, and N111 together coordinate Mn(2+). H112 (proton donor) is an active-site residue. Residues H161 and H235 each coordinate Mn(2+).

It belongs to the PPP phosphatase family. PP-4 (PP-X) subfamily. It depends on Mn(2+) as a cofactor.

It carries out the reaction O-phospho-L-seryl-[protein] + H2O = L-seryl-[protein] + phosphate. The enzyme catalyses O-phospho-L-threonyl-[protein] + H2O = L-threonyl-[protein] + phosphate. The chain is Serine/threonine-protein phosphatase PP-X homolog 1 (Ppx1) from Paramecium tetraurelia.